We begin with the raw amino-acid sequence, 305 residues long: tRNA-splicing endonuclease (305 aa).

Catalysis depends on residues Tyr-246, His-257, and Lys-287.

Belongs to the tRNA-intron endonuclease family. Archaeal long subfamily. Homodimer.

It carries out the reaction pretRNA = a 3'-half-tRNA molecule with a 5'-OH end + a 5'-half-tRNA molecule with a 2',3'-cyclic phosphate end + an intron with a 2',3'-cyclic phosphate and a 5'-hydroxyl terminus.. Its function is as follows. Endonuclease that removes tRNA introns. Cleaves pre-tRNA at the 5'- and 3'-splice sites to release the intron. The products are an intron and two tRNA half-molecules bearing 2',3' cyclic phosphate and 5'-OH termini. Recognizes a pseudosymmetric substrate in which 2 bulged loops of 3 bases are separated by a stem of 4 bp. This chain is tRNA-splicing endonuclease, found in Archaeoglobus fulgidus (strain ATCC 49558 / DSM 4304 / JCM 9628 / NBRC 100126 / VC-16).